Consider the following 601-residue polypeptide: COP9 signalosome complex subunit 1 (601 aa).

The span at 1–10 (MQNELLDDPM) shows a compositional bias: acidic residues. Disordered stretches follow at residues 1–54 (MQNE…LDNP) and 268–294 (DADDAEKNSQQSQQAPPQRGENAPYMV). A compositionally biased stretch (low complexity) spans 14-24 (APAAEAAAADE). The PCI domain occupies 338–500 (TILQIKTECL…GIVRILDERD (163 aa)). Positions 535–581 (SISDKETRPKRKNQKESAKFDRNFGGIDVDEDPRGIAGPSGLSDDFN) are disordered.

Belongs to the CSN1 family. As to quaternary structure, component of the CSN complex, probably composed of csn-1, csn-2, csn-3, csn-4, csn-5, csn-6 and csn-7. Within the complex it probably interacts directly with csn-2, csn-4 and csn-5. May interact with itself. Interacts with rbx-1.

Its subcellular location is the cytoplasm. It is found in the nucleus. Essential component of the COP9 signalosome complex (CSN), a complex involved in various cellular and developmental processes. The CSN complex is an essential regulator of the ubiquitin (Ubl) conjugation pathway by mediating the deneddylation of the cullin subunits of the SCF-type E3 ligase complexes, leading to decrease the Ubl ligase activity of SCF. The CSN complex plays an essential role in embryogenesis and oogenesis and is required to regulate microtubule stability in the early embryo. Mediates mei-3/katanin targeting for degradation at the meiosis to mitosis transition via deneddylation of cul-3. The sequence is that of COP9 signalosome complex subunit 1 (csn-1) from Caenorhabditis elegans.